Consider the following 520-residue polypeptide: D-aminopeptidase (520 aa).

Ser62 functions as the Nucleophile in the catalytic mechanism. Lys65 acts as the Proton donor/acceptor in catalysis. The interval 477–487 is important for specificity; the sequence is QRSMDAPSPGE. A substrate-binding site is contributed by Asp481.

Belongs to the peptidase S12 family. As to quaternary structure, homodimer.

It catalyses the reaction Release of an N-terminal D-amino acid from a peptide, Xaa-|-Yaa-, in which Xaa is preferably D-Ala, D-Ser or D-Thr. D-amino acid amides and methyl esters also are hydrolyzed, as is glycine amide.. Its activity is regulated as follows. Inhibited by beta-lactam compounds such as 6-aminopenicillic acid, 7-aminocephalosporanic acid, benzylpenicillin and ampicillin. Inhibited by p-chloromercuribenzoate. Hydrolyzes N-terminal residues in D-amino acid-containing peptides. This Brucella anthropi (Ochrobactrum anthropi) protein is D-aminopeptidase (dap).